Reading from the N-terminus, the 247-residue chain is Orotidine 5'-phosphate decarboxylase (247 aa).

Substrate is bound by residues aspartate 22, lysine 44, 71-80 (DLKFHDIPNT), threonine 131, arginine 192, glutamine 201, glycine 221, and arginine 222. Lysine 73 functions as the Proton donor in the catalytic mechanism.

It belongs to the OMP decarboxylase family. Type 1 subfamily. Homodimer.

It carries out the reaction orotidine 5'-phosphate + H(+) = UMP + CO2. It participates in pyrimidine metabolism; UMP biosynthesis via de novo pathway; UMP from orotate: step 2/2. In terms of biological role, catalyzes the decarboxylation of orotidine 5'-monophosphate (OMP) to uridine 5'-monophosphate (UMP). The sequence is that of Orotidine 5'-phosphate decarboxylase from Pectobacterium atrosepticum (strain SCRI 1043 / ATCC BAA-672) (Erwinia carotovora subsp. atroseptica).